Here is a 1202-residue protein sequence, read N- to C-terminus: Calmodulin-binding transcription activator 2 (1202 aa).

Residues R30–C155 constitute a DNA-binding region (CG-1). The short motif at R79–K86 is the Nuclear localization signal element. 3 disordered regions span residues S263–G322, G361–P409, and P421–G491. Residues P270 to L283 are compositionally biased toward pro residues. Low complexity-rich tracts occupy residues S289–S299 and T313–G322. 2 stretches are compositionally biased toward pro residues: residues S365–A374 and P460–L476. An IPT/TIG domain is found at D537–R615. ANK repeat units follow at residues M712–Q745, C757–D787, and R791–P821. Disordered regions lie at residues P817 to M874 and P906 to P929. 2 stretches are compositionally biased toward low complexity: residues S826–S846 and P906–S917. IQ domains are found at residues Y1049–I1078 and T1102–I1131.

The protein belongs to the CAMTA family. As to quaternary structure, may interact with calmodulin. As to expression, detected in brain. Expressed at constant levels throughout the cell cycle in neuroblastoma cell lines.

It is found in the nucleus. Its function is as follows. Transcription activator. May act as tumor suppressor. This is Calmodulin-binding transcription activator 2 (CAMTA2) from Homo sapiens (Human).